Here is a 332-residue protein sequence, read N- to C-terminus: Ketol-acid reductoisomerase (NADP(+)) (332 aa).

Positions 1–182 (MAVIYYDKDC…GSNRAGILET (182 aa)) constitute a KARI N-terminal Rossmann domain. Residues 25 to 28 (YGAQ) and 83 to 86 (DTSQ) each bind NADP(+). Residue His108 is part of the active site. Gly134 serves as a coordination point for NADP(+). Positions 183–328 (TFAEETETDL…AELRSMMSWL (146 aa)) constitute a KARI C-terminal knotted domain. Mg(2+) is bound by residues Asp191, Glu195, Glu227, and Glu231. Position 252 (Ser252) interacts with substrate.

It belongs to the ketol-acid reductoisomerase family. It depends on Mg(2+) as a cofactor.

The enzyme catalyses (2R)-2,3-dihydroxy-3-methylbutanoate + NADP(+) = (2S)-2-acetolactate + NADPH + H(+). The catalysed reaction is (2R,3R)-2,3-dihydroxy-3-methylpentanoate + NADP(+) = (S)-2-ethyl-2-hydroxy-3-oxobutanoate + NADPH + H(+). It participates in amino-acid biosynthesis; L-isoleucine biosynthesis; L-isoleucine from 2-oxobutanoate: step 2/4. The protein operates within amino-acid biosynthesis; L-valine biosynthesis; L-valine from pyruvate: step 2/4. In terms of biological role, involved in the biosynthesis of branched-chain amino acids (BCAA). Catalyzes an alkyl-migration followed by a ketol-acid reduction of (S)-2-acetolactate (S2AL) to yield (R)-2,3-dihydroxy-isovalerate. In the isomerase reaction, S2AL is rearranged via a Mg-dependent methyl migration to produce 3-hydroxy-3-methyl-2-ketobutyrate (HMKB). In the reductase reaction, this 2-ketoacid undergoes a metal-dependent reduction by NADPH to yield (R)-2,3-dihydroxy-isovalerate. This Dehalococcoides mccartyi (strain ATCC BAA-2100 / JCM 16839 / KCTC 5957 / BAV1) protein is Ketol-acid reductoisomerase (NADP(+)).